The chain runs to 150 residues: uncharacterized protein (150 aa).

This is an uncharacterized protein from Azospirillum brasilense.